The following is a 413-amino-acid chain: Serine hydroxymethyltransferase (413 aa).

Residues Leu-117 and 121–123 (GHL) contribute to the (6S)-5,6,7,8-tetrahydrofolate site. N6-(pyridoxal phosphate)lysine is present on Lys-226. (6S)-5,6,7,8-tetrahydrofolate contacts are provided by residues Glu-239 and 349-351 (SPF).

The protein belongs to the SHMT family. Homodimer. Requires pyridoxal 5'-phosphate as cofactor.

It localises to the cytoplasm. The enzyme catalyses (6R)-5,10-methylene-5,6,7,8-tetrahydrofolate + glycine + H2O = (6S)-5,6,7,8-tetrahydrofolate + L-serine. It participates in one-carbon metabolism; tetrahydrofolate interconversion. Its pathway is amino-acid biosynthesis; glycine biosynthesis; glycine from L-serine: step 1/1. In terms of biological role, catalyzes the reversible interconversion of serine and glycine with tetrahydrofolate (THF) serving as the one-carbon carrier. This reaction serves as the major source of one-carbon groups required for the biosynthesis of purines, thymidylate, methionine, and other important biomolecules. Also exhibits THF-independent aldolase activity toward beta-hydroxyamino acids, producing glycine and aldehydes, via a retro-aldol mechanism. This Bacillus cereus (strain ATCC 10987 / NRS 248) protein is Serine hydroxymethyltransferase.